Reading from the N-terminus, the 365-residue chain is MFKALAGIVLALVATLAHAERIRDLTSVQGVRENSLIGYGLVVGLDGTGDQTTQTPFTTQTLNNMLSQLGITVPTGTNMQLKNVAAVMVTASYPPFARQGQTIDVVVSSMGNAKSLRGGTLLMTPLKGVDSQVYALAQGNILVGGAGASAGGSSVQVNQLNGGRITNGAIIERELPTQFGAGNTINLQLNDEDFTMAQQITDAINRARGYGSATALDARTVQVRVPSGNSSQVRFLADIQNMEVNVTPQDAKVVINSRTGSVVMNREVTLDSCAVAQGNLSVTVNRQLNVNQPNTPFGGGQTVVTPQTQIDLRQSGGSLQSVRSSANLNSVVRALNALGATPMDLMSILQSMQSAGCLRAKLEII.

The N-terminal stretch at 1-19 is a signal peptide; it reads MFKALAGIVLALVATLAHA.

It belongs to the FlgI family. As to quaternary structure, the basal body constitutes a major portion of the flagellar organelle and consists of four rings (L,P,S, and M) mounted on a central rod.

The protein resides in the periplasm. The protein localises to the bacterial flagellum basal body. In terms of biological role, assembles around the rod to form the L-ring and probably protects the motor/basal body from shearing forces during rotation. The sequence is that of Flagellar P-ring protein from Salmonella heidelberg (strain SL476).